The chain runs to 587 residues: Estrogen receptor (587 aa).

A modulating (transactivation AF-1) region spans residues 1–176; it reads MTLHTKTSGV…SMESTKETRY (176 aa). NR C4-type zinc fingers lie at residues 177–197 and 213–237; these read CAVCNDYASGYHYGVWSCEGC and CPATNQCTIDKNRRKSCQACRLRKC. The nuclear receptor DNA-binding region spans 177–242; sequence CAVCNDYASG…RLRKCYEVGM (66 aa). Positions 243–302 are hinge; that stretch reads MKGGIRKDRRGGRVMKQKRQREEQDSRNGEASSTELRAPTLWASPLVVKHNKKNSPALSL. A disordered region spans residues 248 to 277; the sequence is RKDRRGGRVMKQKRQREEQDSRNGEASSTE. Positions 249 to 261 are enriched in basic residues; that stretch reads KDRRGGRVMKQKR. The 237-residue stretch at 303–539 folds into the NR LBD domain; it reads TAEQMVSALL…DLLLEMLDAH (237 aa). The interval 303 to 587 is transactivation AF-2; the sequence is TAEQMVSALL…KEEENMQNTL (285 aa).

Belongs to the nuclear hormone receptor family. NR3 subfamily. In terms of assembly, binds DNA as a homodimer. Can form a heterodimer with ER-beta.

Its subcellular location is the nucleus. Its function is as follows. The steroid hormones and their receptors are involved in the regulation of eukaryotic gene expression and affect cellular proliferation and differentiation in target tissues. In Taeniopygia guttata (Zebra finch), this protein is Estrogen receptor (ESR1).